A 554-amino-acid chain; its full sequence is Arginine--tRNA ligase (554 aa).

The 'HIGH' region motif lies at Ala-129 to His-139.

This sequence belongs to the class-I aminoacyl-tRNA synthetase family. In terms of assembly, monomer.

The protein localises to the cytoplasm. It carries out the reaction tRNA(Arg) + L-arginine + ATP = L-arginyl-tRNA(Arg) + AMP + diphosphate. The polypeptide is Arginine--tRNA ligase (Syntrophotalea carbinolica (strain DSM 2380 / NBRC 103641 / GraBd1) (Pelobacter carbinolicus)).